The chain runs to 209 residues: MKNLVVVDHPLIKHKLTIMRDKNTGPKEFRELLREITLLLAYEATRHLKCEEVEVETPITKTIGYRINDKDVVVVPILRAGLVMADGILELLPNASVGHIGIYRDPETLQAVEYYAKLPPLNDDKEVFLLDPMLATGVSSVKAIEILKENGAKKITLVALIAAPEGVEAVERKYKDVKIYVAALDERLNDHGYIIPGLGDAGDRLFRTK.

5-phospho-alpha-D-ribose 1-diphosphate is bound by residues Arg-79, Arg-104, and 131 to 139 (DPMLATGVS). Uracil-binding positions include Ile-194 and 199 to 201 (GDA). Asp-200 contributes to the 5-phospho-alpha-D-ribose 1-diphosphate binding site.

This sequence belongs to the UPRTase family. The cofactor is Mg(2+).

The catalysed reaction is UMP + diphosphate = 5-phospho-alpha-D-ribose 1-diphosphate + uracil. It functions in the pathway pyrimidine metabolism; UMP biosynthesis via salvage pathway; UMP from uracil: step 1/1. Its activity is regulated as follows. Allosterically activated by GTP. Functionally, catalyzes the conversion of uracil and 5-phospho-alpha-D-ribose 1-diphosphate (PRPP) to UMP and diphosphate. This Thermotoga petrophila (strain ATCC BAA-488 / DSM 13995 / JCM 10881 / RKU-1) protein is Uracil phosphoribosyltransferase.